The chain runs to 247 residues: ATP synthase subunit a, chloroplastic (247 aa).

Transmembrane regions (helical) follow at residues 38-58 (QVLI…TVAV), 95-115 (VPFI…GALL), 134-154 (INTT…AGLT), 199-219 (LVVV…VMFL), and 220-240 (GLFT…AYIG).

This sequence belongs to the ATPase A chain family. In terms of assembly, F-type ATPases have 2 components, CF(1) - the catalytic core - and CF(0) - the membrane proton channel. CF(1) has five subunits: alpha(3), beta(3), gamma(1), delta(1), epsilon(1). CF(0) has four main subunits: a, b, b' and c.

The protein localises to the plastid. It localises to the chloroplast thylakoid membrane. In terms of biological role, key component of the proton channel; it plays a direct role in the translocation of protons across the membrane. The polypeptide is ATP synthase subunit a, chloroplastic (Acorus calamus var. americanus (American sweet flag)).